The chain runs to 507 residues: ATP synthase subunit alpha, chloroplastic (507 aa).

170-177 serves as a coordination point for ATP; it reads GDRQTGKT.

Belongs to the ATPase alpha/beta chains family. As to quaternary structure, F-type ATPases have 2 components, CF(1) - the catalytic core - and CF(0) - the membrane proton channel. CF(1) has five subunits: alpha(3), beta(3), gamma(1), delta(1), epsilon(1). CF(0) has four main subunits: a, b, b' and c.

The protein localises to the plastid. It is found in the chloroplast thylakoid membrane. It carries out the reaction ATP + H2O + 4 H(+)(in) = ADP + phosphate + 5 H(+)(out). Functionally, produces ATP from ADP in the presence of a proton gradient across the membrane. The alpha chain is a regulatory subunit. The chain is ATP synthase subunit alpha, chloroplastic from Sorghum bicolor (Sorghum).